The chain runs to 220 residues: Deep-sea actinoporin Cjtox I (220 aa).

An N-terminal signal peptide occupies residues 1–19 (MNRLIILCLVAATIYSTIA). A propeptide spanning residues 20-42 (LPMKEDISNEERPTSVNEKPVKK) is cleaved from the precursor. Phosphocholine-binding residues include S96, V128, S146, P148, Y174, Y178, and Y179. Residues 146–161 (SVPYDYNWYSNWWNIK) form a trp-rich region, which is important for the binding to lipid membrane region. The Cell attachment site, crucial for protein stability signature appears at 185–187 (KGN).

This sequence belongs to the actinoporin family. Sea anemone subfamily. In terms of assembly, octamer or nonamer in membranes. Monomer in the soluble state. In terms of tissue distribution, expressed in tentacles.

It is found in the secreted. The protein resides in the nematocyst. Its subcellular location is the target cell membrane. Probably acts in predation. Pore-forming protein that forms cations-selective hydrophilic pores of around 1 nm and causes cytolysis. Pore formation is a multi-step process that involves specific recognition of membrane sphingomyelin (but neither cholesterol nor phosphatidylcholine) using aromatic rich region and adjacent phosphocholine (POC) binding site, firm binding to the membrane (mainly driven by hydrophobic interactions) accompanied by the transfer of the N-terminal region to the lipid-water interface and finally pore formation after oligomerization of monomers. Shows hemolytic activity on equine erythrocytes. Hemolysis is moderately inhibited in presence of sphingomyelin, suggesting that this protein targets sphingomyelin. In Cribrinopsis japonica (Deep-sea anemone), this protein is Deep-sea actinoporin Cjtox I.